We begin with the raw amino-acid sequence, 130 residues long: MSMQDPIADMLTRIRNGQAANKAAVTMPSSKLKVAIANVLKEEGFIEDFKVEGDIKPELELTLKYFQGKAVVESIQRVSRPGLRIYKRKDELPKVMAGLGIAVVSTSKGVMTDRAARQAGLGGEIICYVA.

It belongs to the universal ribosomal protein uS8 family. As to quaternary structure, part of the 30S ribosomal subunit. Contacts proteins S5 and S12.

Its function is as follows. One of the primary rRNA binding proteins, it binds directly to 16S rRNA central domain where it helps coordinate assembly of the platform of the 30S subunit. The protein is Small ribosomal subunit protein uS8 of Klebsiella pneumoniae (strain 342).